Reading from the N-terminus, the 191-residue chain is Ribonuclease HII (191 aa).

The region spanning 16–191 (INLIGIDEAG…KLHRKSFKLL (176 aa)) is the RNase H type-2 domain. Residues Asp22, Glu23, and Asp110 each coordinate a divalent metal cation.

Belongs to the RNase HII family. Mn(2+) serves as cofactor. The cofactor is Mg(2+).

The protein localises to the cytoplasm. The catalysed reaction is Endonucleolytic cleavage to 5'-phosphomonoester.. Functionally, endonuclease that specifically degrades the RNA of RNA-DNA hybrids. The protein is Ribonuclease HII (rnhB) of Campylobacter jejuni subsp. jejuni serotype O:2 (strain ATCC 700819 / NCTC 11168).